We begin with the raw amino-acid sequence, 504 residues long: uncharacterized protein (504 aa).

Disordered stretches follow at residues 1-59 (MSSS…KNEY) and 171-255 (GVNS…NQRL). 2 stretches are compositionally biased toward basic and acidic residues: residues 36-50 (KPIDKEKEKEKKEIG) and 199-212 (RAETPKGRKTESRQ). Residues 213–232 (SNRGNNDNGDQRMTSKATTR) show a composition bias toward polar residues.

This is an uncharacterized protein from Caenorhabditis elegans.